Consider the following 222-residue polypeptide: 2-C-methyl-D-erythritol 4-phosphate cytidylyltransferase (222 aa).

Belongs to the IspD/TarI cytidylyltransferase family. IspD subfamily.

It catalyses the reaction 2-C-methyl-D-erythritol 4-phosphate + CTP + H(+) = 4-CDP-2-C-methyl-D-erythritol + diphosphate. It functions in the pathway isoprenoid biosynthesis; isopentenyl diphosphate biosynthesis via DXP pathway; isopentenyl diphosphate from 1-deoxy-D-xylulose 5-phosphate: step 2/6. Functionally, catalyzes the formation of 4-diphosphocytidyl-2-C-methyl-D-erythritol from CTP and 2-C-methyl-D-erythritol 4-phosphate (MEP). The sequence is that of 2-C-methyl-D-erythritol 4-phosphate cytidylyltransferase from Thermotoga maritima (strain ATCC 43589 / DSM 3109 / JCM 10099 / NBRC 100826 / MSB8).